A 543-amino-acid chain; its full sequence is Heparanase (543 aa).

The N-terminal stretch at 1-35 is a signal peptide; the sequence is MLLRSKPALPPPLMLLLLGPLGPLSPGALPRPAQA. Heparan sulfate group contacts are provided by residues 62 to 64 and Thr-97; that span reads DAN. Residues 110 to 157 constitute a propeptide, linker peptide; it reads STFEERSYWQSQVNQDICKYGSIPPDVEEKLRLEWPYQEQLLLREHYQ. Cys-127 and Cys-179 are joined by a disulfide. Position 158–162 (158–162) interacts with heparan sulfate group; the sequence is KKFKN. N-linked (GlcNAc...) asparagine glycosylation is found at Asn-162, Asn-178, Asn-200, and Asn-217. Glu-225 acts as the Proton donor in catalysis. Asn-238 is a glycosylation site (N-linked (GlcNAc...) asparagine). Heparan sulfate group is bound by residues 270-280, His-296, and Arg-303; that span reads QPRRKTAKMLK. Positions 288–417 are required for heterodimerization with the heparanase 8 kDa subunit; sequence EVIDSVTWHH…LLFKKLVGTK (130 aa). The active-site Nucleophile is the Glu-343. Heparan sulfate group is bound by residues 348–350 and 389–391; these read YGG and GNY. Cys-437 and Cys-542 form a disulfide bridge. The N-linked (GlcNAc...) asparagine glycan is linked to Asn-459. A required for transferring proheparanase to the Golgi apparatus, secretion and subsequent enzyme activity and for enhancement of PKB/AKT1 phosphorylation region spans residues 527–543; that stretch reads FSYSFFVIRNAKVAACI.

This sequence belongs to the glycosyl hydrolase 79 family. Heterodimer; heterodimer formation between the 8 kDa and the 50 kDa subunits is required for enzyme activity. Interacts with TF; the interaction, inhibited by heparin, enhances the generation of activated factor X and activates coagulation. Interacts with HRG; the interaction is enhanced at acidic pH, partially inhibits binding of HPSE to cell surface receptors and modulates its enzymatic activity. Interacts with SDC1; the interaction enhances the shedding of SDC1. Interacts with HPSE2. Proteolytically processed. The cleavage of the 65 kDa form leads to the generation of a linker peptide, and 8 kDa and 50 kDa products. The active form, the 8/50 kDa heterodimer, is resistant to degradation. Complete removal of the linker peptide appears to be a prerequisite to the complete activation of the enzyme. Post-translationally, N-glycosylated. Glycosylation of the 50 kDa subunit appears to be essential for its solubility. Highly expressed in placenta and spleen and weakly expressed in lymph node, thymus, peripheral blood leukocytes, bone marrow, endothelial cells, fetal liver and tumor tissues. Also expressed in hair follicles, specifically in both Henle's and Huxley's layers of inner the root sheath (IRS) at anagen phase.

Its subcellular location is the lysosome membrane. It localises to the secreted. The protein resides in the nucleus. It catalyses the reaction endohydrolysis of (1-&gt;4)-beta-D-glycosidic bonds of heparan sulfate chains in heparan sulfate proteoglycan.. Inhibited by EDTA, laminarin sulfate and, to a lower extent, by heparin and sulfamin and activated by calcium and magnesium. Functionally, endoglycosidase that cleaves heparan sulfate proteoglycans (HSPGs) into heparan sulfate side chains and core proteoglycans. Participates in extracellular matrix (ECM) degradation and remodeling. Selectively cleaves the linkage between a glucuronic acid unit and an N-sulfo glucosamine unit carrying either a 3-O-sulfo or a 6-O-sulfo group. Can also cleave the linkage between a glucuronic acid unit and an N-sulfo glucosamine unit carrying a 2-O-sulfo group, but not linkages between a glucuronic acid unit and a 2-O-sulfated iduronic acid moiety. It is essentially inactive at neutral pH but becomes active under acidic conditions such as during tumor invasion and in inflammatory processes. Facilitates cell migration associated with metastasis, wound healing and inflammation. Enhances shedding of syndecans, and increases endothelial invasion and angiogenesis in myelomas. Acts as a procoagulant by increasing the generation of activation factor X in the presence of tissue factor and activation factor VII. Increases cell adhesion to the extracellular matrix (ECM), independent of its enzymatic activity. Induces AKT1/PKB phosphorylation via lipid rafts increasing cell mobility and invasion. Heparin increases this AKT1/PKB activation. Regulates osteogenesis. Enhances angiogenesis through up-regulation of SRC-mediated activation of VEGF. Implicated in hair follicle inner root sheath differentiation and hair homeostasis. The polypeptide is Heparanase (HPSE) (Homo sapiens (Human)).